Here is a 181-residue protein sequence, read N- to C-terminus: Endoribonuclease YbeY (181 aa).

Zn(2+)-binding residues include H115, H119, and H125.

The protein belongs to the endoribonuclease YbeY family. Requires Zn(2+) as cofactor.

It is found in the cytoplasm. In terms of biological role, single strand-specific metallo-endoribonuclease involved in late-stage 70S ribosome quality control and in maturation of the 3' terminus of the 16S rRNA. The polypeptide is Endoribonuclease YbeY (Bifidobacterium adolescentis (strain ATCC 15703 / DSM 20083 / NCTC 11814 / E194a)).